The chain runs to 1648 residues: eIF-2-alpha kinase GCN2 (1648 aa).

The disordered stretch occupies residues M1 to E26. Residues H25–H137 enclose the RWD domain. Residues H146–S205 adopt a coiled-coil conformation. A Phosphoserine modification is found at S230. 2 consecutive Protein kinase domains span residues V286–I538 and F589–L1000. Residues L595 to V603 and K618 contribute to the ATP site. The segment at P661 to I784 is disordered. At T666 the chain carries Phosphothreonine. Polar residues-rich tracts occupy residues P673 to S686 and L704 to F722. 2 stretches are compositionally biased toward acidic residues: residues S730–R739 and S753–D763. Basic and acidic residues predominate over residues C775 to I784. D846 (proton acceptor) is an active-site residue. T869 carries the phosphothreonine modification. A phosphothreonine; by autocatalysis mark is found at T898 and T903. The histidyl-tRNA synthetase-like stretch occupies residues I1021–K1492. At K1258 the chain carries N6-acetyllysine.

The protein belongs to the protein kinase superfamily. Ser/Thr protein kinase family. GCN2 subfamily. As to quaternary structure, homodimer; homodimerization is important for kinase activation by uncharged tRNAs. Interacts with GCN1; this interaction stimulates EIF2AK4/GCN2 kinase activity and is impaired by IMPACT upon a variety of stress conditions, such as amino acid depletion, UV-C irradiation, proteasome inhibitor treatment and glucose deprivation. Interacts with DNAJC3; this interaction inhibits EIF2AK4/GCN2 kinase activity during endoplasmic reticulum (ER), hypothermic and amino acid-starving stress conditions. Interacts with MAP3K20; activates EIF2AK4/GCN2 kinase activity in response to moderate ribotoxic stress. In terms of processing, autophosphorylated; autophosphorylation on Thr-898 is increased upon amino acid starvation and in UV irradiation cells and inhibited in presence of IMPACT. In terms of tissue distribution, expressed in liver. Expressed predominantly in the hippocampal CA1 region and the dentate gyrus, and to a lesser degree in CA3 (at protein level). Expressed in liver, lung, brain, kidney, skeletal muscle and testis. Expressed weakly in heart and spleen. Expressed in the hippocampal CA1 and CA3 regions, the dentate gyrus and cerebellum. Isoform 1 is widely expressed. Isoform 1 is expressed in brain, liver, skeletal muscle and testis. Isoform 3 is expressed in lung, brain, testis, prostate and choroid plexus. Isoform 4 is expressed in muscle, lung, kidney, brain, testis and prostate.

The protein localises to the cytoplasm. The enzyme catalyses L-seryl-[protein] + ATP = O-phospho-L-seryl-[protein] + ADP + H(+). The catalysed reaction is L-threonyl-[protein] + ATP = O-phospho-L-threonyl-[protein] + ADP + H(+). (Microbial infection) Kinase activity is enhanced by alphavirus genomic RNA sequences. Kinase activity is stimulated upon binding to uncharged tRNAs. Activated by serum starvation (in vitro). Its function is as follows. Metabolic-stress sensing protein kinase that phosphorylates the alpha subunit of eukaryotic translation initiation factor 2 (EIF2S1/eIF-2-alpha) in response to low amino acid availability. Plays a role as an activator of the integrated stress response (ISR) required for adaptation to amino acid starvation. EIF2S1/eIF-2-alpha phosphorylation in response to stress converts EIF2S1/eIF-2-alpha into a global protein synthesis inhibitor, leading to a global attenuation of cap-dependent translation, and thus to a reduced overall utilization of amino acids, while concomitantly initiating the preferential translation of ISR-specific mRNAs, such as the transcriptional activator ATF4, and hence allowing ATF4-mediated reprogramming of amino acid biosynthetic gene expression to alleviate nutrient depletion. Required for the translational induction of protein kinase PRKCH following amino acid starvation. Binds uncharged tRNAs. Involved in cell cycle arrest by promoting cyclin D1 mRNA translation repression after the unfolded protein response pathway (UPR) activation or cell cycle inhibitor CDKN1A/p21 mRNA translation activation in response to amino acid deprivation. Plays a role in the consolidation of synaptic plasticity, learning as well as formation of long-term memory. Plays a role in neurite outgrowth inhibition. Plays a role in feeding behavior to maintain amino acid homeostasis; contributes to the innate aversion toward diets of imbalanced amino acid composition. Plays a proapoptotic role in response to glucose deprivation. Promotes global cellular protein synthesis repression in response to UV irradiation independently of the stress-activated protein kinase/c-Jun N-terminal kinase (SAPK/JNK) and p38 MAPK signaling pathways. In terms of biological role, (Microbial infection) Plays a role in the antiviral response against alphavirus infection; impairs early viral mRNA translation of the incoming genomic virus RNA, thus preventing alphavirus replication. Functionally, (Microbial infection) Plays a role in modulating the adaptive immune response to Yellow fever virus infection; promotes dendritic cells to initiate autophagy and antigene presentation to both CD4(+) and CD8(+) T-cells under amino acid starvation. The sequence is that of eIF-2-alpha kinase GCN2 from Mus musculus (Mouse).